The primary structure comprises 687 residues: Threonine--tRNA ligase (687 aa).

The TGS domain maps to 1–67; the sequence is MAHLIEAAPN…EQDSKFTPVP (67 aa). Residues 266-572 form a catalytic region; that stretch reads DHRRLGAELD…LLEHYAGAFP (307 aa). Cys371, His422, and His549 together coordinate Zn(2+).

The protein belongs to the class-II aminoacyl-tRNA synthetase family. In terms of assembly, homodimer. Zn(2+) serves as cofactor.

Its subcellular location is the cytoplasm. The enzyme catalyses tRNA(Thr) + L-threonine + ATP = L-threonyl-tRNA(Thr) + AMP + diphosphate + H(+). Functionally, catalyzes the attachment of threonine to tRNA(Thr) in a two-step reaction: L-threonine is first activated by ATP to form Thr-AMP and then transferred to the acceptor end of tRNA(Thr). Also edits incorrectly charged L-seryl-tRNA(Thr). This Corynebacterium diphtheriae (strain ATCC 700971 / NCTC 13129 / Biotype gravis) protein is Threonine--tRNA ligase.